Here is a 188-residue protein sequence, read N- to C-terminus: uncharacterized protein (188 aa).

This is an uncharacterized protein from Saccharomyces cerevisiae (strain ATCC 204508 / S288c) (Baker's yeast).